A 339-amino-acid polypeptide reads, in one-letter code: Acyl-CoA dehydrogenase FadE28 (339 aa).

FAD is bound by residues R227, Q238, H295, and G299.

The protein belongs to the acyl-CoA dehydrogenase family. Heterotetramer composed of FadE28 and FadE29. Requires FAD as cofactor.

It catalyses the reaction 3-oxochol-4-en-22-oyl-CoA + A = 3-oxochola-4,17-dien-22-oyl-CoA + AH2. The protein operates within steroid metabolism; cholesterol degradation. In terms of biological role, involved in the third cycle of side chain dehydrogenation in the beta-oxidation of cholesterol catabolism. May play an important role for the initial macrophage invasion, possibly in response to the acidification of phagosome. It contributes partly to the virulence by increasing the efficiency of beta-oxidation. Catalyzes the dehydrogenation of 2'-propanoyl-CoA ester side chains of 3-oxo-4-pregnene-20-carboxyl-CoA (3-OPC-CoA) to yield 3-oxo-4,17-pregnadiene-20-carboxyl-CoA (3-OPDC-CoA). Also able to dehydrogenate steroyl-CoA such as 3-oxo-chol-4-en-24-oyl-CoA (3-OCO-CoA), 1beta-(2'-propanoyl-CoA)-3a-alpha-H-7a-beta-methylhexahydro-4-indanone (indanone-CoA ester), hexahydroindanone and pregenenone. The chain is Acyl-CoA dehydrogenase FadE28 (fadE28) from Mycobacterium tuberculosis (strain ATCC 25618 / H37Rv).